Consider the following 382-residue polypeptide: MDNLFTFLHEIEDRYTRTIFNFHLISCDEIGDIYGLMKERISSEDMFDNIVYNKDIHPAIKKLVYCDIQLTKHIINQNTYPVFNDSSQVKCCHYFDINSDNSNISSRTVEIFEREKSSLVSYIKTTNKKRKVNYGEIKKTVHGGTNANYFSGKKSDEYLSTTVRSNINQPWIKTISKRMRVNIINHSIVTRGKSSILQTIEIIFTNRTCVKIFKDSTMHIILSKDKDEKGCIHMIDKLFYVYYNLFLLFEDIIQNEYFKEVANVVNHVLTATALDEKLFLIKKMAKHDVYGVSNFKIGMFNLTFIKSLDHTVFPSLLDEDSKIKFFKGKKLNIVALRSLEDCINYVTKSENMIEMMKERSTILNSIDIETESVDRLKDLLLK.

Belongs to the orthopoxvirus OPG150 family. Heterodimerizes with protein A8 to form the virus intermediate transcription factor (VITF)-3.

Functionally, acts with RNA polymerase to initiate transcription from intermediate gene promoters. The polypeptide is Intermediate transcription factor 3 large subunit (OPG150) (Homo sapiens (Human)).